Consider the following 75-residue polypeptide: UPF0270 protein PP_1747 (75 aa).

Belongs to the UPF0270 family.

In Pseudomonas putida (strain ATCC 47054 / DSM 6125 / CFBP 8728 / NCIMB 11950 / KT2440), this protein is UPF0270 protein PP_1747.